Reading from the N-terminus, the 126-residue chain is UPF0102 protein BCAN_A0183 (126 aa).

The protein belongs to the UPF0102 family.

This Brucella canis (strain ATCC 23365 / NCTC 10854 / RM-666) protein is UPF0102 protein BCAN_A0183.